Reading from the N-terminus, the 109-residue chain is MNIDLQRRYDSSDDFFSLGGSVVMKLSADAAIAVCERAGQHGLVVARIEGGIWHFPGFEARLDCIWDGIDPPVDVGVAEQNNLAAAEFVRSESQEHDVFVVTAPEITGW.

Specifically interacts with cognate toxin CdiA, which inhibits the toxin.

In terms of biological role, immunity protein component of a toxin-immunity protein module, which functions as a cellular contact-dependent growth inhibition (CDI) system. CDI modules allow bacteria to communicate with and inhibit the growth of closely related neighboring bacteria in a contact-dependent fashion. Neutralizes the toxic activity of cognate toxin CdiA (C-terminal 282 residue CT fragment) upon expression in E.coli. Does not inhibit toxic activity of CdiA from other strains of B.pseudomallei. This Burkholderia pseudomallei (Pseudomonas pseudomallei) protein is Immunity protein CdiI (cdiI).